Consider the following 710-residue polypeptide: Polyribonucleotide nucleotidyltransferase (710 aa).

Residues Asp-487 and Asp-493 each contribute to the Mg(2+) site. The 60-residue stretch at Pro-554 to Ile-613 folds into the KH domain. The 69-residue stretch at Gly-623–Lys-691 folds into the S1 motif domain.

The protein belongs to the polyribonucleotide nucleotidyltransferase family. The cofactor is Mg(2+).

It localises to the cytoplasm. It catalyses the reaction RNA(n+1) + phosphate = RNA(n) + a ribonucleoside 5'-diphosphate. Its function is as follows. Involved in mRNA degradation. Catalyzes the phosphorolysis of single-stranded polyribonucleotides processively in the 3'- to 5'-direction. The chain is Polyribonucleotide nucleotidyltransferase from Rhizobium rhizogenes (strain K84 / ATCC BAA-868) (Agrobacterium radiobacter).